A 376-amino-acid chain; its full sequence is Histidinol-phosphate aminotransferase (376 aa).

An N6-(pyridoxal phosphate)lysine modification is found at Lys-230.

It belongs to the class-II pyridoxal-phosphate-dependent aminotransferase family. Histidinol-phosphate aminotransferase subfamily. In terms of assembly, homodimer. Requires pyridoxal 5'-phosphate as cofactor.

The enzyme catalyses L-histidinol phosphate + 2-oxoglutarate = 3-(imidazol-4-yl)-2-oxopropyl phosphate + L-glutamate. It functions in the pathway amino-acid biosynthesis; L-histidine biosynthesis; L-histidine from 5-phospho-alpha-D-ribose 1-diphosphate: step 7/9. The protein is Histidinol-phosphate aminotransferase of Trichodesmium erythraeum (strain IMS101).